Reading from the N-terminus, the 118-residue chain is Secreted RxLR effector protein 143 (118 aa).

The first 18 residues, 1-18, serve as a signal peptide directing secretion; it reads MRHCAFLFRLFLIGYSCS. Basic and acidic residues predominate over residues 35–65; sequence DELPRAEQWDSDGKRILQADDPEHIPTEERG. A disordered region spans residues 35–66; that stretch reads DELPRAEQWDSDGKRILQADDPEHIPTEERGI. The RxLR-dEER motif lies at 49 to 64; it reads RILQADDPEHIPTEER.

The protein belongs to the RxLR effector family.

The protein localises to the secreted. The protein resides in the host cell membrane. Secreted effector that completely suppresses the host cell death induced by cell death-inducing proteins. This is Secreted RxLR effector protein 143 from Plasmopara viticola (Downy mildew of grapevine).